A 429-amino-acid polypeptide reads, in one-letter code: Phenylalanine--tRNA ligase, chloroplastic/mitochondrial (429 aa).

A chloroplast and mitochondrion-targeting transit peptide spans 1–53 (MTVFSVQSTIFSRASVALLSSNGFKRFSFVSSFSSSAAYSPPKMRKRRYPIVS). Ala-54 carries the post-translational modification N-acetylalanine. Substrate-binding positions include 163–166 (SAHQ), Arg-185, 192–194 (THY), 199–201 (QME), Glu-269, and Phe-294. The 92-residue stretch at 338–429 (SKYPPCYKDI…VQKKLNVELR (92 aa)) folds into the FDX-ACB domain.

This sequence belongs to the class-II aminoacyl-tRNA synthetase family. Monomer.

The protein resides in the plastid. It is found in the chloroplast stroma. It localises to the mitochondrion matrix. The catalysed reaction is tRNA(Phe) + L-phenylalanine + ATP = L-phenylalanyl-tRNA(Phe) + AMP + diphosphate + H(+). Functionally, is responsible for the charging of tRNA(Phe) with phenylalanine in mitochondrial translation. This chain is Phenylalanine--tRNA ligase, chloroplastic/mitochondrial, found in Arabidopsis thaliana (Mouse-ear cress).